The following is a 315-amino-acid chain: Acetaldehyde dehydrogenase (315 aa).

13–16 is an NAD(+) binding site; sequence SGNI. The active-site Acyl-thioester intermediate is the Cys-131. NAD(+)-binding positions include 163–171 and Asn-290; that span reads SAGPGTRAN.

The protein belongs to the acetaldehyde dehydrogenase family.

It catalyses the reaction acetaldehyde + NAD(+) + CoA = acetyl-CoA + NADH + H(+). The sequence is that of Acetaldehyde dehydrogenase from Xanthobacter autotrophicus (strain ATCC BAA-1158 / Py2).